A 548-amino-acid chain; its full sequence is Acetamidase (548 aa).

Active-site charge relay system residues include K129 and S204. S228 acts as the Acyl-ester intermediate in catalysis.

The protein belongs to the amidase family.

The catalysed reaction is a monocarboxylic acid amide + H2O = a monocarboxylate + NH4(+). The enzyme catalyses acetamide + H2O = acetate + NH4(+). Allows acetamide to be used as a sole carbon or nitrogen source. The sequence is that of Acetamidase (amdS) from Emericella nidulans (strain FGSC A4 / ATCC 38163 / CBS 112.46 / NRRL 194 / M139) (Aspergillus nidulans).